The chain runs to 219 residues: uncharacterized protein (219 aa).

An HD domain is found at 57–158 (QLEHMTRAAM…LSEASRQTLL (102 aa)).

This is an uncharacterized protein from Acanthamoeba polyphaga mimivirus (APMV).